A 122-amino-acid polypeptide reads, in one-letter code: Large ribosomal subunit protein bL12 (122 aa).

This sequence belongs to the bacterial ribosomal protein bL12 family. Homodimer. Part of the ribosomal stalk of the 50S ribosomal subunit. Forms a multimeric L10(L12)X complex, where L10 forms an elongated spine to which 2 to 4 L12 dimers bind in a sequential fashion. Binds GTP-bound translation factors.

Its function is as follows. Forms part of the ribosomal stalk which helps the ribosome interact with GTP-bound translation factors. Is thus essential for accurate translation. This is Large ribosomal subunit protein bL12 from Levilactobacillus brevis (strain ATCC 367 / BCRC 12310 / CIP 105137 / JCM 1170 / LMG 11437 / NCIMB 947 / NCTC 947) (Lactobacillus brevis).